The sequence spans 505 residues: Maturase K (505 aa).

This sequence belongs to the intron maturase 2 family. MatK subfamily.

The protein localises to the plastid. It is found in the chloroplast. Its function is as follows. Usually encoded in the trnK tRNA gene intron. Probably assists in splicing its own and other chloroplast group II introns. In Portulacaria afra (Elephant's food), this protein is Maturase K.